We begin with the raw amino-acid sequence, 252 residues long: Glucosamine-6-phosphate deaminase (252 aa).

The active-site Proton acceptor; for enolization step is D67. Residue N137 is the For ring-opening step of the active site. The active-site Proton acceptor; for ring-opening step is H139. E144 serves as the catalytic For ring-opening step.

This sequence belongs to the glucosamine/galactosamine-6-phosphate isomerase family. NagB subfamily.

The enzyme catalyses alpha-D-glucosamine 6-phosphate + H2O = beta-D-fructose 6-phosphate + NH4(+). It functions in the pathway amino-sugar metabolism; N-acetylneuraminate degradation; D-fructose 6-phosphate from N-acetylneuraminate: step 5/5. In terms of biological role, catalyzes the reversible isomerization-deamination of glucosamine 6-phosphate (GlcN6P) to form fructose 6-phosphate (Fru6P) and ammonium ion. This Staphylococcus aureus (strain bovine RF122 / ET3-1) protein is Glucosamine-6-phosphate deaminase.